A 64-amino-acid polypeptide reads, in one-letter code: Large ribosomal subunit protein bL35 (64 aa).

Basic residues predominate over residues 1-15; sequence MPKQKSHSGASKRFR. Residues 1-22 are disordered; it reads MPKQKSHSGASKRFRVTGSGKV.

It belongs to the bacterial ribosomal protein bL35 family.

This chain is Large ribosomal subunit protein bL35, found in Frankia casuarinae (strain DSM 45818 / CECT 9043 / HFP020203 / CcI3).